The following is a 225-amino-acid chain: tRNA (guanine-N(1)-)-methyltransferase (225 aa).

Residues Gly-112 and 132 to 137 (IGDYVL) contribute to the S-adenosyl-L-methionine site.

Belongs to the RNA methyltransferase TrmD family. In terms of assembly, homodimer.

It localises to the cytoplasm. The catalysed reaction is guanosine(37) in tRNA + S-adenosyl-L-methionine = N(1)-methylguanosine(37) in tRNA + S-adenosyl-L-homocysteine + H(+). In terms of biological role, specifically methylates guanosine-37 in various tRNAs. The protein is tRNA (guanine-N(1)-)-methyltransferase of Bacteroides thetaiotaomicron (strain ATCC 29148 / DSM 2079 / JCM 5827 / CCUG 10774 / NCTC 10582 / VPI-5482 / E50).